The chain runs to 150 residues: Cytochrome c-type biogenesis protein CcmE (150 aa).

Topologically, residues 1 to 9 (MRNLKKTRR) are cytoplasmic. A helical; Signal-anchor for type II membrane protein transmembrane segment spans residues 10-30 (IQILLVAGGALVLSTALIGYG). Topologically, residues 31–150 (MRDGINFFRA…VYRDPAQPEG (120 aa)) are periplasmic. H123 and Y127 together coordinate heme.

Belongs to the CcmE/CycJ family.

It is found in the cell inner membrane. Functionally, heme chaperone required for the biogenesis of c-type cytochromes. Transiently binds heme delivered by CcmC and transfers the heme to apo-cytochromes in a process facilitated by CcmF and CcmH. The protein is Cytochrome c-type biogenesis protein CcmE of Rhodobacter capsulatus (strain ATCC BAA-309 / NBRC 16581 / SB1003).